A 180-amino-acid polypeptide reads, in one-letter code: Adenine phosphoribosyltransferase (180 aa).

An N-acetylserine modification is found at Ser2. Residues Ser15 and Ser30 each carry the phosphoserine modification. At Tyr60 the chain carries Phosphotyrosine. Ser66 is subject to Phosphoserine. Lys114 bears the N6-acetyllysine mark. The residue at position 135 (Thr135) is a Phosphothreonine.

The protein belongs to the purine/pyrimidine phosphoribosyltransferase family. Homodimer.

It is found in the cytoplasm. The enzyme catalyses AMP + diphosphate = 5-phospho-alpha-D-ribose 1-diphosphate + adenine. It participates in purine metabolism; AMP biosynthesis via salvage pathway; AMP from adenine: step 1/1. Its function is as follows. Catalyzes a salvage reaction resulting in the formation of AMP, that is energically less costly than de novo synthesis. In Mastomys natalensis (African soft-furred rat), this protein is Adenine phosphoribosyltransferase.